We begin with the raw amino-acid sequence, 1365 residues long: Zinc finger protein 423 (1365 aa).

A compositionally biased stretch (basic residues) spans 1 to 11 (MSRRKQAKPRS). Residues 1–69 (MSRRKQAKPR…SHDERVGEED (69 aa)) are disordered. Over residues 37 to 51 (VSERDSDRKESRAVG) the composition is skewed to basic and acidic residues. The C2H2-type 1 zinc finger occupies 76–98 (FTCDNCQQDFECLADLTEHRTNH). A disordered region spans residues 99–126 (CPADGDDDPGLSWVASSPSSKDVASPSQ). The span at 112–126 (VASSPSSKDVASPSQ) shows a compositional bias: low complexity. 4 consecutive C2H2-type zinc fingers follow at residues 150–172 (YPCQ…EQIH), 178–200 (FKCT…VKLH), 206–228 (YSCQ…LKTH), and 234–256 (FKCS…MQAH). Positions 250–280 (QSHMQAHRKNKEHLAKKDQGKRDGSSSDVTE) are disordered. Positions 261-274 (EHLAKKDQGKRDGS) are enriched in basic and acidic residues. 3 C2H2-type zinc fingers span residues 286-309 (YMCD…LTQH), 318-341 (LQCI…DRTH), and 346-368 (HKCP…LDSH). Positions 366 to 429 (DSHRQPDSSN…LAPSSDHDDG (64 aa)) are disordered. Residues 386–400 (SVASMSSATPDSSAS) show a composition bias toward low complexity. Residues 437–461 (YSCPYCSKRDFNSLAVLEIHLKTIH) form a C2H2-type 9; degenerate zinc finger. 3 consecutive C2H2-type zinc fingers follow at residues 469 to 492 (HTCQ…RKAH), 513 to 536 (FHCN…RVSH), and 555 to 578 (FFCN…QQTH). The C2H2-type 13; atypical zinc finger occupies 603–628 (YSCPYCTNSPIFGSLLKLTKHIKENH). 7 C2H2-type zinc fingers span residues 675-697 (YPCN…LKSH), 705-728 (QSCP…LTIH), 736-759 (YVCE…LDMH), 764-787 (YHCT…AVKH), 794-817 (YRCT…KHSH), 831-853 (RKCI…ITTH), and 857-880 (YNCR…REKH). Residues 885-895 (GGNGNGNGGSQ) are compositionally biased toward gly residues. The disordered stretch occupies residues 885–916 (GGNGNGNGGSQNGTPNGVTQSSKRSTAGSTAA). Polar residues predominate over residues 902–913 (VTQSSKRSTAGS). The segment at 954 to 976 (YACDICGAAYTMESLLQNHRLRD) adopts a C2H2-type 21; degenerate zinc-finger fold. C2H2-type zinc fingers lie at residues 1000–1022 (HKCN…AQTH), 1029–1051 (YMCP…KVTH), 1090–1112 (FRCV…GTFH), 1201–1224 (LRCS…QVDH), 1249–1271 (YQCI…VANH), 1279–1301 (HECK…LIEH), 1310–1333 (FKCP…FAVH), and 1340–1363 (YDCS…LSQH).

This sequence belongs to the krueppel C2H2-type zinc-finger protein family.

Its subcellular location is the nucleus. In terms of biological role, transcription factor that can both act as an activator or a repressor depending on the context. Plays a central role in BMP signaling and olfactory neurogenesis. Associates with SMADs in response to bmp2 leading to activate transcription of BMP target genes. Acts as a transcriptional repressor involved in terminal olfactory receptor neurons differentiation. Involved in olfactory neurogenesis by participating in a developmental switch that regulates the transition from differentiation to maturation in olfactory receptor neurons. This chain is Zinc finger protein 423 (znf423), found in Danio rerio (Zebrafish).